A 66-amino-acid polypeptide reads, in one-letter code: Large ribosomal subunit protein bL33c (66 aa).

This sequence belongs to the bacterial ribosomal protein bL33 family.

It localises to the plastid. The protein localises to the chloroplast. This Lepidium virginicum (Virginia pepperweed) protein is Large ribosomal subunit protein bL33c.